The primary structure comprises 276 residues: Ribosomal RNA small subunit methyltransferase A (276 aa).

Residues asparagine 27, leucine 29, glycine 54, glutamate 75, aspartate 101, and asparagine 123 each coordinate S-adenosyl-L-methionine.

It belongs to the class I-like SAM-binding methyltransferase superfamily. rRNA adenine N(6)-methyltransferase family. RsmA subfamily.

Its subcellular location is the cytoplasm. It carries out the reaction adenosine(1518)/adenosine(1519) in 16S rRNA + 4 S-adenosyl-L-methionine = N(6)-dimethyladenosine(1518)/N(6)-dimethyladenosine(1519) in 16S rRNA + 4 S-adenosyl-L-homocysteine + 4 H(+). Its function is as follows. Specifically dimethylates two adjacent adenosines (A1518 and A1519) in the loop of a conserved hairpin near the 3'-end of 16S rRNA in the 30S particle. May play a critical role in biogenesis of 30S subunits. This chain is Ribosomal RNA small subunit methyltransferase A, found in Bartonella bacilliformis (strain ATCC 35685 / KC583 / Herrer 020/F12,63).